We begin with the raw amino-acid sequence, 108 residues long: MQKEKVNIKKNDKVKVVAGKDKGKIGKVLSVNREKNRLVVENINMIKRHTRPNVSNRQGGIIEREAPIDRSNVMLMCGKCVTPVRIKMKELEDGRKVRMCGKCKELID.

This sequence belongs to the universal ribosomal protein uL24 family. Part of the 50S ribosomal subunit.

In terms of biological role, one of two assembly initiator proteins, it binds directly to the 5'-end of the 23S rRNA, where it nucleates assembly of the 50S subunit. One of the proteins that surrounds the polypeptide exit tunnel on the outside of the subunit. The sequence is that of Large ribosomal subunit protein uL24 from Desulfosudis oleivorans (strain DSM 6200 / JCM 39069 / Hxd3) (Desulfococcus oleovorans).